A 209-amino-acid polypeptide reads, in one-letter code: Cytochrome bo(3) ubiquinol oxidase subunit 3 (209 aa).

The Cytoplasmic segment spans residues 1 to 29; the sequence is MSTAVLNKHLADAHEVGHDHDHAHDSGGN. A helical membrane pass occupies residues 30–50; that stretch reads TVFGFWLYLMTDCVLFASVFA. Topologically, residues 51-72 are periplasmic; it reads TYAVLVHHTAGGPSGKDIFELP. A helical membrane pass occupies residues 73–93; the sequence is YVLVETAILLVSSCTYGLAML. At 94-102 the chain is on the cytoplasmic side; the sequence is SAHKGAKGQ. A helical transmembrane segment spans residues 103-123; that stretch reads AIAWLGVTFLLGAAFIGMEIN. Over 124–143 the chain is Periplasmic; the sequence is EFHHLIAEGFGPSRSAFLSS. The chain crosses the membrane as a helical span at residues 144–164; sequence FFTLVGMHGLHVSAGLLWMLV. Topologically, residues 165–186 are cytoplasmic; it reads LMAQIWTRGLTAQNNTRMMCLS. Residues 187 to 207 form a helical membrane-spanning segment; it reads LFWHFLDIVWICVFTVVYLMG. The Periplasmic portion of the chain corresponds to 208–209; that stretch reads AL.

Belongs to the cytochrome c oxidase subunit 3 family. In terms of assembly, heterooctamer of two A chains, two B chains, two C chains and two D chains.

It is found in the cell inner membrane. In terms of biological role, cytochrome bo(3) ubiquinol terminal oxidase is the component of the aerobic respiratory chain of E.coli that predominates when cells are grown at high aeration. Has proton pump activity across the membrane in addition to electron transfer, pumping 2 protons/electron. This Pseudomonas aeruginosa (strain ATCC 15692 / DSM 22644 / CIP 104116 / JCM 14847 / LMG 12228 / 1C / PRS 101 / PAO1) protein is Cytochrome bo(3) ubiquinol oxidase subunit 3 (cyoC).